The sequence spans 162 residues: NADH-quinone oxidoreductase subunit I 2 (162 aa).

4Fe-4S ferredoxin-type domains are found at residues 52-82 (LRRYPNGEERCIACKLCEAVCPAQAITIEAG) and 93-122 (ERYDIDMVKCIYCGLCQEACPVDAIVEGPN). Positions 62, 65, 68, 72, 102, 105, 108, and 112 each coordinate [4Fe-4S] cluster.

This sequence belongs to the complex I 23 kDa subunit family. In terms of assembly, NDH-1 is composed of 14 different subunits. Subunits NuoA, H, J, K, L, M, N constitute the membrane sector of the complex. It depends on [4Fe-4S] cluster as a cofactor.

The protein resides in the cell inner membrane. The enzyme catalyses a quinone + NADH + 5 H(+)(in) = a quinol + NAD(+) + 4 H(+)(out). NDH-1 shuttles electrons from NADH, via FMN and iron-sulfur (Fe-S) centers, to quinones in the respiratory chain. The immediate electron acceptor for the enzyme in this species is believed to be ubiquinone. Couples the redox reaction to proton translocation (for every two electrons transferred, four hydrogen ions are translocated across the cytoplasmic membrane), and thus conserves the redox energy in a proton gradient. The chain is NADH-quinone oxidoreductase subunit I 2 from Rhodopseudomonas palustris (strain BisA53).